The chain runs to 933 residues: Phospholipase D2 (933 aa).

Disordered stretches follow at residues 1–20 (MAAT…SSQL) and 134–160 (SPAP…RRTA). One can recognise a PX domain in the interval 65–195 (VIAQVVGTER…TEFLEVSQLS (131 aa)). The PH domain maps to 203 to 311 (KGLEGVIRKR…WAQEITELAQ (109 aa)). 2 PLD phosphodiesterase domains span residues 437–464 (TLWA…AYGR) and 751–778 (ELIY…NDRS). Positions 441–788 (HHEKLLVVDQ…LLGKRDSELA (348 aa)) are catalytic.

It belongs to the phospholipase D family. As to quaternary structure, interacts with PIP5K1B. Interacts with EGFR. Phosphorylated by FGR.

The protein localises to the cell membrane. The catalysed reaction is a 1,2-diacyl-sn-glycero-3-phosphocholine + H2O = a 1,2-diacyl-sn-glycero-3-phosphate + choline + H(+). It catalyses the reaction 1,2-dihexadecanoyl-sn-glycero-3-phosphocholine + H2O = 1,2-dihexadecanoyl-sn-glycero-3-phosphate + choline + H(+). In terms of biological role, function as phospholipase selective for phosphatidylcholine. May have a role in signal-induced cytoskeletal regulation and/or endocytosis. The sequence is that of Phospholipase D2 (PLD2) from Bos taurus (Bovine).